The chain runs to 602 residues: Aspartate--tRNA(Asp/Asn) ligase (602 aa).

E175 contacts L-aspartate. Residues 199–202 (QIFK) are aspartate. An L-aspartate-binding site is contributed by R221. Residues 221-223 (RDE) and Q230 each bind ATP. H458 is an L-aspartate binding site. Position 492 (E492) interacts with ATP. An L-aspartate-binding site is contributed by R499. 544–547 (GLDR) contacts ATP.

Belongs to the class-II aminoacyl-tRNA synthetase family. Type 1 subfamily. As to quaternary structure, homodimer.

Its subcellular location is the cytoplasm. It catalyses the reaction tRNA(Asx) + L-aspartate + ATP = L-aspartyl-tRNA(Asx) + AMP + diphosphate. In terms of biological role, aspartyl-tRNA synthetase with relaxed tRNA specificity since it is able to aspartylate not only its cognate tRNA(Asp) but also tRNA(Asn). Reaction proceeds in two steps: L-aspartate is first activated by ATP to form Asp-AMP and then transferred to the acceptor end of tRNA(Asp/Asn). The chain is Aspartate--tRNA(Asp/Asn) ligase from Cupriavidus taiwanensis (strain DSM 17343 / BCRC 17206 / CCUG 44338 / CIP 107171 / LMG 19424 / R1) (Ralstonia taiwanensis (strain LMG 19424)).